A 256-amino-acid polypeptide reads, in one-letter code: 2,3,4,5-tetrahydropyridine-2,6-dicarboxylate N-acetyltransferase (256 aa).

Belongs to the transferase hexapeptide repeat family. DapH subfamily.

It catalyses the reaction (S)-2,3,4,5-tetrahydrodipicolinate + acetyl-CoA + H2O = L-2-acetamido-6-oxoheptanedioate + CoA. Its pathway is amino-acid biosynthesis; L-lysine biosynthesis via DAP pathway; LL-2,6-diaminopimelate from (S)-tetrahydrodipicolinate (acetylase route): step 1/3. Catalyzes the transfer of an acetyl group from acetyl-CoA to tetrahydrodipicolinate. This chain is 2,3,4,5-tetrahydropyridine-2,6-dicarboxylate N-acetyltransferase, found in Lactococcus lactis subsp. lactis (strain IL1403) (Streptococcus lactis).